A 201-amino-acid chain; its full sequence is MGSGRRALSAVPAVLLVLTLPGLPVWAQNDTEPIVLEGKCLVVCDSNPATDSKGSSSSPLGISVRAANSKVAFSAVRSTNHEPSEMSNKTRIIYFDQILVNVGNFFTLESVFVAPRKGIYSFSFHVIKVYQSQTIQVNLMLNGKPVISAFAGDKDVTREAATNGVLLYLDKEDKVYLKLEKGNLVGGWQYSTFSGFLVFPL.

An N-terminal signal peptide occupies residues 1-27 (MGSGRRALSAVPAVLLVLTLPGLPVWA). N-linked (GlcNAc...) asparagine glycosylation is found at Asn-29 and Asn-88. The 136-residue stretch at 66–201 (AANSKVAFSA…TFSGFLVFPL (136 aa)) folds into the C1q domain.

In terms of assembly, homohexamer; disulfide-linked homotrimers. The trimers are assembled via the globular C1q domains. The trimers associate via N-terminal cysteine residues to form disulfide-linked hexamers. May form oligomers with CBLN1, CBLN2 and CBLN3 prior to secretion. Strongly interacts with DCC in a NTN1-displaceable fashion. Weakly binds to NRXN1 and NRXN2 long and short isoforms produced by alternative promoter usage. Interaction with NRXN3 short isoform is hardly detectable; no interaction at all with NRXN3 long isoform. Sialoglycoprotein.

The protein localises to the secreted. It localises to the synapse. Its function is as follows. Acts as a synaptic organizer in specific subsets of neurons in the brain. Essential for the formation and maintenance of inhibitory GABAergic synapses. Promotes the development of dendrite-targeting inhibitory GABAergic synapses made by somatostatin-positive interneurons. May contribute to the function of ventral medial habenula region of the brain implicated in the regulation of anxiety-related behaviors. May play a role in CBLN3 export from the endoplasmic reticulum and secretion. This chain is Cerebellin-4 (CBLN4), found in Homo sapiens (Human).